A 910-amino-acid polypeptide reads, in one-letter code: Potassium/sodium hyperpolarization-activated cyclic nucleotide-gated channel 1 (910 aa).

Residues 1–75 are disordered; the sequence is MEGGGKPNSA…PAGSFEDAEG (75 aa). At 1 to 131 the chain is on the cytoplasmic side; sequence MEGGGKPNSA…WIIHPYSDFR (131 aa). Residues 132-153 form a helical membrane-spanning segment; the sequence is FYWDLIMLIMMVGNLVIIPVGI. Residues 154-162 are Extracellular-facing; it reads TFFTEQTTT. Residues 163 to 183 traverse the membrane as a helical segment; that stretch reads PWIIFNVASDTVFLLDLIMNF. At 184–204 the chain is on the cytoplasmic side; it reads RTGTVNEDSSEIILDPKVIKM. A helical transmembrane segment spans residues 205–225; that stretch reads NYLKSWFVVDFISSIPVDYIF. Residues 226–249 are Extracellular-facing; that stretch reads LIVEKGMDSEVYKTARALRIVRFT. Residues 250–270 form a helical; Voltage-sensor membrane-spanning segment; sequence KILSLLRLLRLSRLIRYIHQW. Over 271–284 the chain is Cytoplasmic; the sequence is EEIFHMTYDLASAV. The helical transmembrane segment at 285–307 threads the bilayer; the sequence is VRIFNLIGMMLLLCHWDGCLQFL. At 308-333 the chain is on the extracellular side; sequence VPLLQDFPPDCWVSLNEMVNDSWGKQ. N327 is a glycosylation site (N-linked (GlcNAc...) asparagine). An intramembrane region (pore-forming) is located at residues 334–355; that stretch reads YSYALFKAMSHMLCIGYGAQAP. Residues 347–351 carry the Selectivity filter motif; it reads CIGYG. Topologically, residues 356–360 are extracellular; it reads VSMSD. The helical transmembrane segment at 361 to 381 threads the bilayer; sequence LWITMLSMIVGATCYAMFVGH. Over 382 to 910 the chain is Cytoplasmic; that stretch reads ATALIQSLDS…AEKPRFASNL (529 aa). Residues G528, E529, C531, R538, T539, R579, and R582 each contribute to the 3',5'-cyclic AMP site. Disordered stretches follow at residues 634 to 681, 771 to 791, and 865 to 910; these read TALN…QPSA, QQQQ…VHKS, and QMSS…ASNL. Residues 639-680 are compositionally biased toward low complexity; it reads TSSTTTPTSRMRTQSPPVYTATSLSHSNLHSPSPSTQTPQPS. Positions 780 to 791 are enriched in polar residues; sequence GSSTPKNEVHKS. The span at 875-885 shows a compositional bias: pro residues; the sequence is RGVPPAPPPPA. A compositionally biased stretch (basic and acidic residues) spans 900–910; sequence DAEKPRFASNL.

The protein belongs to the potassium channel HCN family. As to quaternary structure, homotetramer. Heterotetramer with HCN2. The potassium channel is composed of a homo- or heterotetrameric complex of pore-forming subunits. Interacts with KCNE2. Interacts with the SH3 domain of CSK. Post-translationally, N-glycosylated. As to expression, predominantly expressed in brain. Highly expressed in apical dendrites of pyramidal neurons in the cortex, in the layer corresponding to the stratum lacunosum-moleculare in the hippocampus and in axons of basket cells in the cerebellum (at protein level). Expressed in a subset of elongated cells in taste buds.

The protein localises to the cell membrane. The enzyme catalyses Na(+)(in) = Na(+)(out). It catalyses the reaction K(+)(in) = K(+)(out). Its activity is regulated as follows. Activated by cAMP. cAMP binding causes a conformation change that leads to the assembly of an active tetramer and channel opening. Compared to other family members, cAMP has less stimulatory effect on HCN1 because part of the molecules already contain bound cAMP and form homotetramers when cAMP levels are low, this inherent tetramerization in HCN1 results in a weaker response to increased cAMP. Its function is as follows. Hyperpolarization-activated ion channel that are permeable to sodium and potassium ions. Exhibits weak selectivity for potassium over sodium ions. Contributes to the native pacemaker currents in heart (If) and in neurons (Ih). Participates in cerebellar mechanisms of motor learning. May mediate responses to sour stimuli. The polypeptide is Potassium/sodium hyperpolarization-activated cyclic nucleotide-gated channel 1 (Hcn1) (Mus musculus (Mouse)).